We begin with the raw amino-acid sequence, 331 residues long: MEIINGPVLPRYAAPATGALTSDAKISGQLLRRVHLRRRACGLQGDHYRAARRFFGFPSERHARSGWVWPVYCSYGSSSDGDGAAAADYDASGEEFVNSSVMEAVELRSVSDGFVIKMRDGKNLRCVQNNPRVLRLRDSAPHHAIVLKMEDGSDLLLPIIVMETPSIMLLAALRNIRIPRPTIYNVVKEMTERMGYAVRLVRITEMVHDAYYSRLYLAKIGNEEETISLDLKPSDAINIAFRCKVPIQVNRRIAYNNGLKVVQPTPSESYVSSDQFQYTRLDRPDDQPCFEAQEFDLVRNMLVAAVEERYKDAAQYRDQLFMFRAKKKNMI.

In terms of domain architecture, BFN spans 126-261 (CVQNNPRVLR…RIAYNNGLKV (136 aa)). Residues 291-326 (EAQEFDLVRNMLVAAVEERYKDAAQYRDQLFMFRAK) form the UVR domain.

The protein belongs to the bifunctional nuclease family.

The protein localises to the nucleus. Bifunctional nuclease with both RNase and DNase activities. Involved in basal defense response. Participates in abscisic acid-derived callose deposition following infection by a necrotrophic pathogen. The sequence is that of Bifunctional nuclease (BBD) from Oryza minuta.